The following is a 234-amino-acid chain: Accessory gland protein Acp29AB (234 aa).

An N-terminal signal peptide occupies residues 1–21; it reads MYATNLLYLLALWNLWLVSGG. N29, N61, N127, and N164 each carry an N-linked (GlcNAc...) asparagine glycan. Positions 137–234 constitute a C-type lectin domain; sequence VTCREMNGHL…SFVCQANQWA (98 aa). Cystine bridges form between C139-C228 and C207-C220.

The protein localises to the secreted. Functionally, responsible for physiological and behavioral changes in mated female flies. The chain is Accessory gland protein Acp29AB (Acp29AB) from Drosophila simulans (Fruit fly).